A 235-amino-acid chain; its full sequence is Large ribosomal subunit protein uL1 (235 aa).

It belongs to the universal ribosomal protein uL1 family. In terms of assembly, part of the 50S ribosomal subunit.

Binds directly to 23S rRNA. The L1 stalk is quite mobile in the ribosome, and is involved in E site tRNA release. Its function is as follows. Protein L1 is also a translational repressor protein, it controls the translation of the L11 operon by binding to its mRNA. The protein is Large ribosomal subunit protein uL1 of Arthrobacter sp. (strain FB24).